Consider the following 104-residue polypeptide: Photosystem II reaction center Psb28 protein (104 aa).

This sequence belongs to the Psb28 family. In terms of assembly, part of the photosystem II complex.

It localises to the cellular thylakoid membrane. The polypeptide is Photosystem II reaction center Psb28 protein (Synechococcus sp. (strain JA-3-3Ab) (Cyanobacteria bacterium Yellowstone A-Prime)).